The primary structure comprises 276 residues: NH(3)-dependent NAD(+) synthetase (276 aa).

Residue 43-50 (GISGGVDS) participates in ATP binding. Mg(2+) is bound at residue Asp49. Deamido-NAD(+) is bound at residue Arg146. ATP is bound at residue Thr166. Glu171 is a binding site for Mg(2+). Residues Lys179 and Asp186 each coordinate deamido-NAD(+). Residues Lys195 and Thr217 each coordinate ATP. 266-267 (HK) lines the deamido-NAD(+) pocket.

Belongs to the NAD synthetase family. As to quaternary structure, homodimer.

The enzyme catalyses deamido-NAD(+) + NH4(+) + ATP = AMP + diphosphate + NAD(+) + H(+). It participates in cofactor biosynthesis; NAD(+) biosynthesis; NAD(+) from deamido-NAD(+) (ammonia route): step 1/1. In terms of biological role, catalyzes the ATP-dependent amidation of deamido-NAD to form NAD. Uses ammonia as a nitrogen source. This is NH(3)-dependent NAD(+) synthetase from Shewanella baltica (strain OS185).